Reading from the N-terminus, the 423-residue chain is MNILQNLKKSDPVISNFINSEKNRQETHLELIASENFASIAVMQAQGSVLTNKYAEGLPQKRYYGGCEFVDEIEELAIQRAKKLFNANWANVQPHSGAQANAAVFLSLLQPGDTIMGMDLSHGGHLTHGSPVNMSGKWFNAVHYGVNKETSELNFDEIREIALETKPKLIICGYSAYPRTIDFESFRNIADEVGAFLMADIAHIAGLVASKLHPNPLPYCDVVTTTTHKTLRGPRGGLILCKDGEFGKKFDKSVFPGTQGGPLEHIIAAKAVAFGEALQPDFVNYSQQVIKNAKVLASTLISRGIDIVSGGTDNHIVLLDLRSINMTGKIADLLVSAVNITANKNTVPFDPESPFVTSGLRLGTAALTTRGFNETAFAEVGEIIADRLLNPNDSVIESQCKDKVLALCNRFPLYEGKLEASIK.

(6S)-5,6,7,8-tetrahydrofolate contacts are provided by residues L120 and 124 to 126; that span reads GHL. K229 is subject to N6-(pyridoxal phosphate)lysine. (6S)-5,6,7,8-tetrahydrofolate is bound by residues E245 and 353–355; that span reads SPF.

This sequence belongs to the SHMT family. As to quaternary structure, homodimer. Pyridoxal 5'-phosphate serves as cofactor.

Its subcellular location is the cytoplasm. It carries out the reaction (6R)-5,10-methylene-5,6,7,8-tetrahydrofolate + glycine + H2O = (6S)-5,6,7,8-tetrahydrofolate + L-serine. The protein operates within one-carbon metabolism; tetrahydrofolate interconversion. Its pathway is amino-acid biosynthesis; glycine biosynthesis; glycine from L-serine: step 1/1. Its function is as follows. Catalyzes the reversible interconversion of serine and glycine with tetrahydrofolate (THF) serving as the one-carbon carrier. This reaction serves as the major source of one-carbon groups required for the biosynthesis of purines, thymidylate, methionine, and other important biomolecules. Also exhibits THF-independent aldolase activity toward beta-hydroxyamino acids, producing glycine and aldehydes, via a retro-aldol mechanism. In Prochlorococcus marinus (strain MIT 9312), this protein is Serine hydroxymethyltransferase.